The chain runs to 497 residues: Zinc finger protein 3 (497 aa).

Residues 1–20 (MGTEKKEGLPKEETSEDSKP) show a composition bias toward basic and acidic residues. Residues 1–53 (MGTEKKEGLPKEETSEDSKPHGQTVEKLAQEVCHGHEFGEASEEDMSEGHLRE) form a disordered region. Residues Lys6 and Lys11 each participate in a glycyl lysine isopeptide (Lys-Gly) (interchain with G-Cter in SUMO2) cross-link. 13 C2H2-type zinc fingers span residues 136-158 (HTCK…MRVH), 164-186 (FECK…QRIH), 192-214 (FACT…HRIH), 220-242 (YKCE…QRIH), 248-270 (YECN…QRIH), 276-298 (HECS…QKIH), 304-326 (YLCN…QRIH), 332-354 (YECS…IRIH), 360-382 (YVCK…ERIH), 388-410 (YECF…QRIH), 416-438 (HQCN…QKIH), 444-466 (YECS…QRIH), and 472-494 (YECQ…QSVH).

Belongs to the krueppel C2H2-type zinc-finger protein family.

The protein localises to the nucleus. In terms of biological role, may be involved in transcriptional regulation. This Mus musculus (Mouse) protein is Zinc finger protein 3 (Zfp3).